The sequence spans 393 residues: Formate-dependent phosphoribosylglycinamide formyltransferase (393 aa).

N(1)-(5-phospho-beta-D-ribosyl)glycinamide-binding positions include 22–23 and glutamate 82; that span reads EL. ATP contacts are provided by residues arginine 114, lysine 155, 160–165, 195–198, and glutamate 203; these read SSGHGQ and EGFV. The 190-residue stretch at 119–308 folds into the ATP-grasp domain; it reads RLAAEELGLP…EFALHARAIL (190 aa). Residues glutamate 267 and glutamate 279 each coordinate Mg(2+). N(1)-(5-phospho-beta-D-ribosyl)glycinamide is bound by residues aspartate 286, lysine 356, and 363–364; that span reads RR.

This sequence belongs to the PurK/PurT family. As to quaternary structure, homodimer.

It catalyses the reaction N(1)-(5-phospho-beta-D-ribosyl)glycinamide + formate + ATP = N(2)-formyl-N(1)-(5-phospho-beta-D-ribosyl)glycinamide + ADP + phosphate + H(+). The protein operates within purine metabolism; IMP biosynthesis via de novo pathway; N(2)-formyl-N(1)-(5-phospho-D-ribosyl)glycinamide from N(1)-(5-phospho-D-ribosyl)glycinamide (formate route): step 1/1. Its function is as follows. Involved in the de novo purine biosynthesis. Catalyzes the transfer of formate to 5-phospho-ribosyl-glycinamide (GAR), producing 5-phospho-ribosyl-N-formylglycinamide (FGAR). Formate is provided by PurU via hydrolysis of 10-formyl-tetrahydrofolate. The chain is Formate-dependent phosphoribosylglycinamide formyltransferase from Mannheimia succiniciproducens (strain KCTC 0769BP / MBEL55E).